The chain runs to 530 residues: Nectin-2 (530 aa).

Residues 1–31 (MARAAVLPPSRLSPTLPLLPLLLLLLQETGA) form the signal peptide. The Ig-like V-type domain occupies 32–147 (QDVRVRVLPE…NGTRRGVTWL (116 aa)). Topologically, residues 32–351 (QDVRVRVLPE…STAGAGATGG (320 aa)) are extracellular. Cys-54 and Cys-131 form a disulfide bridge. Asn-128 and Asn-138 each carry an N-linked (GlcNAc...) asparagine glycan. Ig-like C2-type domains are found at residues 153–247 (PENH…VTLS) and 252–337 (PEVS…VILV). Cystine bridges form between Cys-174–Cys-229 and Cys-274–Cys-320. A glycan (N-linked (GlcNAc...) asparagine) is linked at Asn-315. A helical transmembrane segment spans residues 352 to 372 (IIGGIIAAIIATAVAGTGILI). Topologically, residues 373-530 (CRQQRKEQRL…DFFVSRAMYV (158 aa)) are cytoplasmic. The segment at 382–407 (LQAADEEEELEGPPSYKPPTPKAKLE) is disordered. Position 401 is a phosphothreonine (Thr-401). Phosphoserine is present on Ser-424.

The protein belongs to the nectin family. In terms of assembly, can form trans-heterodimers with NECTIN3. Interacts with CD226 or with PVRIG; these interactions are competitive and have a differential functional outcome on T-cell activation, either positive or negative, respectively. Binds with low affinity to TIGIT. As to expression, brain, spinal cord, spleen, kidney, heart and liver.

The protein resides in the cell membrane. Modulator of T-cell signaling. Can be either a costimulator of T-cell function, or a coinhibitor, depending on the receptor it binds to. Upon binding to CD226, stimulates T-cell proliferation and cytokine production, including that of IL2, IL5, IL10, IL13, and IFNG. Upon interaction with PVRIG, inhibits T-cell proliferation. These interactions are competitive. Probable cell adhesion protein. This is Nectin-2 from Mus musculus (Mouse).